The chain runs to 461 residues: ATP-dependent protease ATPase subunit HslU (461 aa).

Residues Ile-18 and 60–65 (GVGKTE) contribute to the ATP site. Residues 157-178 (EGSSVKPEPTAQQKESRQKMRK) form a disordered region. ATP-binding residues include Asp-273, Glu-339, and Arg-411.

Belongs to the ClpX chaperone family. HslU subfamily. In terms of assembly, a double ring-shaped homohexamer of HslV is capped on each side by a ring-shaped HslU homohexamer. The assembly of the HslU/HslV complex is dependent on binding of ATP.

The protein resides in the cytoplasm. Its function is as follows. ATPase subunit of a proteasome-like degradation complex; this subunit has chaperone activity. The binding of ATP and its subsequent hydrolysis by HslU are essential for unfolding of protein substrates subsequently hydrolyzed by HslV. HslU recognizes the N-terminal part of its protein substrates and unfolds these before they are guided to HslV for hydrolysis. The protein is ATP-dependent protease ATPase subunit HslU of Magnetococcus marinus (strain ATCC BAA-1437 / JCM 17883 / MC-1).